The following is a 384-amino-acid chain: Calreticulin-3 (384 aa).

The first 19 residues, 1–19, serve as a signal peptide directing secretion; it reads MARALVQLWAICMLRVALA. The N-domain stretch occupies residues 20–197; it reads TVYFQEEFLD…GQSIESGSIE (178 aa). N42 carries N-linked (GlcNAc...) asparagine glycosylation. A disulfide bond links C105 and C137. Y109, K111, Y128, and D135 together coordinate an alpha-D-glucoside. 7 consecutive repeat copies span residues 191–202, 208–219, 221–230, 234–245, 249–259, 263–271, and 273–283. The segment at 191 to 245 is 4 X approximate repeats; that stretch reads IESGSIEYDWNLTSLKKETSPAESKDWEQTKDNKAQDWEKHFLDASTSKQSDWNG. Residues 198-294 are P-domain; it reads YDWNLTSLKK…YLTQYDLSEF (97 aa). N201 is a glycosylation site (N-linked (GlcNAc...) asparagine). The segment at 249-283 is 3 X approximate repeats; the sequence is GDWPAPMLQKPPYQDGLKPEGIHKDVWLHRKMKNT. A C-domain region spans residues 295 to 384; that stretch reads ENIGAIGLEL…FNQFHRRNEL (90 aa). E303 serves as a coordination point for an alpha-D-glucoside. Residues 381-384 carry the Prevents secretion from ER motif; it reads RNEL.

Belongs to the calreticulin family. As to quaternary structure, component of an EIF2 complex at least composed of CELF1/CUGBP1, CALR, CALR3, EIF2S1, EIF2S2, HSP90B1 and HSPA5. As to expression, testis specific.

The protein localises to the endoplasmic reticulum lumen. During spermatogenesis, may act as a lectin-independent chaperone for specific client proteins such as ADAM3. Required for sperm fertility. CALR3 capacity for calcium-binding may be absent or much lower than that of CALR. In Homo sapiens (Human), this protein is Calreticulin-3 (CALR3).